The chain runs to 442 residues: Trigger factor (442 aa).

Residues 163–248 (YDRVTINYCI…IIKIEKKQEL (86 aa)) form the PPIase FKBP-type domain.

This sequence belongs to the FKBP-type PPIase family. Tig subfamily.

It is found in the cytoplasm. It carries out the reaction [protein]-peptidylproline (omega=180) = [protein]-peptidylproline (omega=0). Its function is as follows. Involved in protein export. Acts as a chaperone by maintaining the newly synthesized protein in an open conformation. Functions as a peptidyl-prolyl cis-trans isomerase. The protein is Trigger factor of Buchnera aphidicola subsp. Acyrthosiphon pisum (strain 5A).